The primary structure comprises 116 residues: Large ribosomal subunit protein bL17 (116 aa).

It belongs to the bacterial ribosomal protein bL17 family. In terms of assembly, part of the 50S ribosomal subunit. Contacts protein L32.

In Chloroflexus aggregans (strain MD-66 / DSM 9485), this protein is Large ribosomal subunit protein bL17.